The primary structure comprises 385 residues: Aspartate/prephenate aminotransferase (385 aa).

Residues Gly39, Trp125, and Asn175 each coordinate L-aspartate. Lys234 bears the N6-(pyridoxal phosphate)lysine mark. Residue Arg361 coordinates L-aspartate.

The protein belongs to the class-I pyridoxal-phosphate-dependent aminotransferase family. In terms of assembly, homodimer. Requires pyridoxal 5'-phosphate as cofactor.

The protein resides in the cytoplasm. It carries out the reaction L-aspartate + 2-oxoglutarate = oxaloacetate + L-glutamate. It catalyses the reaction L-arogenate + oxaloacetate = prephenate + L-aspartate. Functionally, catalyzes the reversible conversion of aspartate and 2-oxoglutarate to glutamate and oxaloacetate. Can also transaminate prephenate in the presence of aspartate. The polypeptide is Aspartate/prephenate aminotransferase (aspC) (Thermus thermophilus (strain ATCC 27634 / DSM 579 / HB8)).